Here is a 104-residue protein sequence, read N- to C-terminus: ATP-dependent Clp protease adapter protein ClpS (104 aa).

The protein belongs to the ClpS family. Binds to the N-terminal domain of the chaperone ClpA.

Functionally, involved in the modulation of the specificity of the ClpAP-mediated ATP-dependent protein degradation. The sequence is that of ATP-dependent Clp protease adapter protein ClpS from Burkholderia ambifaria (strain MC40-6).